The chain runs to 106 residues: Urease subunit beta (106 aa).

Belongs to the urease beta subunit family. Heterotrimer of UreA (gamma), UreB (beta) and UreC (alpha) subunits. Three heterotrimers associate to form the active enzyme.

It localises to the cytoplasm. It carries out the reaction urea + 2 H2O + H(+) = hydrogencarbonate + 2 NH4(+). The protein operates within nitrogen metabolism; urea degradation; CO(2) and NH(3) from urea (urease route): step 1/1. The sequence is that of Urease subunit beta from Synechococcus sp. (strain WH7805).